A 301-amino-acid chain; its full sequence is 3-dehydroquinate dehydratase (301 aa).

Positions 1–221 (MLQYGVLICG…YYAALLALGI (221 aa)) are 3-dehydroquinate dehydratase. Residues 32–34 (ELR) and arginine 63 each bind 3-dehydroquinate. Histidine 119 acts as the Proton donor/acceptor in catalysis. Residue lysine 145 is the Schiff-base intermediate with substrate of the active site. 3-dehydroquinate contacts are provided by arginine 183, threonine 202, and glutamine 206. A Chorismate mutase domain is found at 222–301 (TPSGGGLPAL…QMCKAVQLVA (80 aa)).

This sequence belongs to the type-I 3-dehydroquinase family. Homodimer.

It carries out the reaction 3-dehydroquinate = 3-dehydroshikimate + H2O. It functions in the pathway metabolic intermediate biosynthesis; chorismate biosynthesis; chorismate from D-erythrose 4-phosphate and phosphoenolpyruvate: step 3/7. In terms of biological role, involved in the third step of the chorismate pathway, which leads to the biosynthesis of aromatic amino acids. Catalyzes the cis-dehydration of 3-dehydroquinate (DHQ) and introduces the first double bond of the aromatic ring to yield 3-dehydroshikimate. The sequence is that of 3-dehydroquinate dehydratase from Pyrobaculum aerophilum (strain ATCC 51768 / DSM 7523 / JCM 9630 / CIP 104966 / NBRC 100827 / IM2).